The primary structure comprises 175 residues: Protein FanH (175 aa).

The signal sequence occupies residues 1–20; the sequence is MIKKVPVLLFFMASISITHA. A disulfide bridge links Cys39 with Cys77.

It is found in the fimbrium. Functionally, involved in the biosynthesis of K99 fimbriae. The polypeptide is Protein FanH (fanH) (Escherichia coli).